A 525-amino-acid polypeptide reads, in one-letter code: Membrane-bound lytic murein transglycosylase F (525 aa).

The first 24 residues, 1-24 (MQIRHFNRLKRSVLLFASVLLLSA), serve as a signal peptide directing secretion. The segment at 25-284 (CQIESQPKSE…SLEEKYIGHI (260 aa)) is non-LT domain. The LT domain stretch occupies residues 286–525 (AFDYVDTRAF…VDEDLDQEEE (240 aa)). Glu329 is an active-site residue. Residues 506-525 (VSGASDITNEVDEDLDQEEE) form a disordered region. Residues 514–525 (NEVDEDLDQEEE) are compositionally biased toward acidic residues.

In the N-terminal section; belongs to the bacterial solute-binding protein 3 family. It in the C-terminal section; belongs to the transglycosylase Slt family.

It is found in the cell outer membrane. The catalysed reaction is Exolytic cleavage of the (1-&gt;4)-beta-glycosidic linkage between N-acetylmuramic acid (MurNAc) and N-acetylglucosamine (GlcNAc) residues in peptidoglycan, from either the reducing or the non-reducing ends of the peptidoglycan chains, with concomitant formation of a 1,6-anhydrobond in the MurNAc residue.. Its function is as follows. Murein-degrading enzyme that degrades murein glycan strands and insoluble, high-molecular weight murein sacculi, with the concomitant formation of a 1,6-anhydromuramoyl product. Lytic transglycosylases (LTs) play an integral role in the metabolism of the peptidoglycan (PG) sacculus. Their lytic action creates space within the PG sacculus to allow for its expansion as well as for the insertion of various structures such as secretion systems and flagella. This is Membrane-bound lytic murein transglycosylase F from Vibrio parahaemolyticus serotype O3:K6 (strain RIMD 2210633).